Here is a 434-residue protein sequence, read N- to C-terminus: Chaperone SurA (434 aa).

An N-terminal signal peptide occupies residues 1-22 (MKPSKHLIFALFALAISQPTMA). PpiC domains lie at 173–274 (DVEY…KIMD) and 283–383 (IEEV…QLEE).

The protein resides in the periplasm. The enzyme catalyses [protein]-peptidylproline (omega=180) = [protein]-peptidylproline (omega=0). In terms of biological role, chaperone involved in the correct folding and assembly of outer membrane proteins. Recognizes specific patterns of aromatic residues and the orientation of their side chains, which are found more frequently in integral outer membrane proteins. May act in both early periplasmic and late outer membrane-associated steps of protein maturation. The polypeptide is Chaperone SurA (Shewanella sp. (strain MR-7)).